The sequence spans 2072 residues: Protein still life, isoform SIF type 1 (2072 aa).

Glycine 2 carries N-myristoyl glycine lipidation. The 119-residue stretch at arginine 29 to serine 147 folds into the WH1 domain. Disordered regions lie at residues serine 153–cysteine 188, aspartate 245–threonine 284, glutamate 327–aspartate 355, asparagine 459–proline 486, glutamate 502–serine 576, alanine 618–arginine 655, and serine 699–alanine 747. Residues valine 275 to threonine 284 show a composition bias toward polar residues. 3 stretches are compositionally biased toward low complexity: residues serine 338–threonine 351, asparagine 459–arginine 476, and serine 522–arginine 553. Residues alanine 564–serine 576 are compositionally biased toward polar residues. Residues isoleucine 634–arginine 655 show a composition bias toward basic and acidic residues. A compositionally biased stretch (polar residues) spans serine 732 to glycine 743. The PH domain maps to threonine 840–phenylalanine 958. Residues glycine 1088 to proline 1119 form a disordered region. Residues serine 1100 to asparagine 1114 are compositionally biased toward low complexity. The RBD domain occupies lysine 1121–tyrosine 1188. Positions glutamine 1204–threonine 1293 constitute a PDZ domain. Residues alanine 1403 to alanine 1424 are disordered. Positions serine 1410 to alanine 1424 are enriched in low complexity. One can recognise a DH domain in the interval lysine 1436–methionine 1630. Disordered stretches follow at residues methionine 1803–threonine 1832, histidine 1844–valine 2039, and proline 2051–asparagine 2072. Low complexity-rich tracts occupy residues glycine 1811–methionine 1821 and glutamine 1926–histidine 1943. Residues histidine 1970–glutamate 1984 are compositionally biased toward basic and acidic residues. Over residues leucine 2007–serine 2022 the composition is skewed to low complexity. Polar residues predominate over residues glutamine 2023–proline 2032.

As to expression, expressed in both larval and adult brains, mainly in a subset of neurons but not in glia. In the adult eye is expressed in the two primary pigment cells in the subapical region of the eye. Also present in photoreceptors.

The protein resides in the synapse. In terms of biological role, regulates synaptic differentiation through the organization of actin cytoskeleton possibly by activating Rho-like GTPases. Is likely a factor in the cascade of Rac1 or Cdc42 in the neurons. May play a role in maintaining proper septate junction functions. Required for eye development and most likely affects corneal lens-formation. The polypeptide is Protein still life, isoform SIF type 1 (sif) (Drosophila melanogaster (Fruit fly)).